The following is a 340-amino-acid chain: Putative cystathionine beta-lyase (340 aa).

K208 bears the N6-(pyridoxal phosphate)lysine mark.

It belongs to the trans-sulfuration enzymes family. Pyridoxal 5'-phosphate serves as cofactor.

The enzyme catalyses L,L-cystathionine + H2O = L-homocysteine + pyruvate + NH4(+). The catalysed reaction is an S-substituted L-cysteine + H2O = a thiol + pyruvate + NH4(+). It functions in the pathway amino-acid biosynthesis; L-methionine biosynthesis via de novo pathway; L-homocysteine from L-cystathionine: step 1/1. This Saccharomyces cerevisiae (strain ATCC 204508 / S288c) (Baker's yeast) protein is Putative cystathionine beta-lyase (IRC7).